The sequence spans 125 residues: Holo-[acyl-carrier-protein] synthase (125 aa).

Asp8 and Glu57 together coordinate Mg(2+).

Belongs to the P-Pant transferase superfamily. AcpS family. Requires Mg(2+) as cofactor.

The protein localises to the cytoplasm. It carries out the reaction apo-[ACP] + CoA = holo-[ACP] + adenosine 3',5'-bisphosphate + H(+). In terms of biological role, transfers the 4'-phosphopantetheine moiety from coenzyme A to a Ser of acyl-carrier-protein. This is Holo-[acyl-carrier-protein] synthase from Laribacter hongkongensis (strain HLHK9).